Consider the following 50-residue polypeptide: Large ribosomal subunit protein eL39 (50 aa).

Positions 1–12 (MGKKSKASKKRL) are enriched in basic residues. Disordered stretches follow at residues 1–20 (MGKK…RQNS) and 30–50 (TNRD…DTDE).

This sequence belongs to the eukaryotic ribosomal protein eL39 family.

The sequence is that of Large ribosomal subunit protein eL39 (rpl39e) from Halobacterium salinarum (strain ATCC 700922 / JCM 11081 / NRC-1) (Halobacterium halobium).